The primary structure comprises 542 residues: Leucine-rich repeat-containing protein 56 (542 aa).

5 LRR repeats span residues 94–115, 117–138, 139–160, 161–182, and 186–206; these read NLDQ…GTSL, HLQV…ASLP, ALKE…CLLE, QLEV…RYLQ, and RLAM…PGPT. An LRRCT domain is found at 207 to 250; it reads NKVPRGYNYRAEVRKLIPQLQVLDEVPAAHTGPPAPPRLSQDWL. Disordered regions lie at residues 308–377, 396–475, and 507–542; these read LLSE…ADSS, LPYR…LQSR, and RLSP…PVPT. Positions 416-426 are enriched in basic and acidic residues; sequence RVPEEQVHQAE. The segment covering 522-532 has biased composition (low complexity); that stretch reads PDAAARPPRAA.

This sequence belongs to the LRRC56 family. Interacts with IFT88.

It is found in the cell projection. It localises to the cilium. In terms of biological role, required for the assembly of dynein arms. This chain is Leucine-rich repeat-containing protein 56 (LRRC56), found in Homo sapiens (Human).